Here is a 545-residue protein sequence, read N- to C-terminus: CTP synthase (545 aa).

The interval 1-266 (MITNYIFVTG…DQYICDKFNL (266 aa)) is amidoligase domain. CTP is bound at residue Ser-14. Position 14 (Ser-14) interacts with UTP. Residues 15 to 20 (SLGKGI) and Asp-72 each bind ATP. Mg(2+) is bound by residues Asp-72 and Glu-140. CTP is bound by residues 147–149 (DIE), 187–192 (KTKPTQ), and Lys-223. Residues 187–192 (KTKPTQ) and Lys-223 contribute to the UTP site. Residue 239–241 (KDV) participates in ATP binding. One can recognise a Glutamine amidotransferase type-1 domain in the interval 291–542 (SIGMVGKYIE…VKSALAHHQD (252 aa)). Gly-352 provides a ligand contact to L-glutamine. Residue Cys-379 is the Nucleophile; for glutamine hydrolysis of the active site. L-glutamine contacts are provided by residues 380–383 (LGMQ), Glu-403, and Arg-470. Active-site residues include His-515 and Glu-517.

Belongs to the CTP synthase family. As to quaternary structure, homotetramer.

It carries out the reaction UTP + L-glutamine + ATP + H2O = CTP + L-glutamate + ADP + phosphate + 2 H(+). The catalysed reaction is L-glutamine + H2O = L-glutamate + NH4(+). It catalyses the reaction UTP + NH4(+) + ATP = CTP + ADP + phosphate + 2 H(+). It participates in pyrimidine metabolism; CTP biosynthesis via de novo pathway; CTP from UDP: step 2/2. Its activity is regulated as follows. Allosterically activated by GTP, when glutamine is the substrate; GTP has no effect on the reaction when ammonia is the substrate. The allosteric effector GTP functions by stabilizing the protein conformation that binds the tetrahedral intermediate(s) formed during glutamine hydrolysis. Inhibited by the product CTP, via allosteric rather than competitive inhibition. Its function is as follows. Catalyzes the ATP-dependent amination of UTP to CTP with either L-glutamine or ammonia as the source of nitrogen. Regulates intracellular CTP levels through interactions with the four ribonucleotide triphosphates. This is CTP synthase from Hamiltonella defensa subsp. Acyrthosiphon pisum (strain 5AT).